We begin with the raw amino-acid sequence, 148 residues long: SsrA-binding protein (148 aa).

The interval Lys123–Thr148 is disordered. Basic and acidic residues predominate over residues Asp126–Arg142.

The protein belongs to the SmpB family.

It is found in the cytoplasm. Functionally, required for rescue of stalled ribosomes mediated by trans-translation. Binds to transfer-messenger RNA (tmRNA), required for stable association of tmRNA with ribosomes. tmRNA and SmpB together mimic tRNA shape, replacing the anticodon stem-loop with SmpB. tmRNA is encoded by the ssrA gene; the 2 termini fold to resemble tRNA(Ala) and it encodes a 'tag peptide', a short internal open reading frame. During trans-translation Ala-aminoacylated tmRNA acts like a tRNA, entering the A-site of stalled ribosomes, displacing the stalled mRNA. The ribosome then switches to translate the ORF on the tmRNA; the nascent peptide is terminated with the 'tag peptide' encoded by the tmRNA and targeted for degradation. The ribosome is freed to recommence translation, which seems to be the essential function of trans-translation. In Burkholderia thailandensis (strain ATCC 700388 / DSM 13276 / CCUG 48851 / CIP 106301 / E264), this protein is SsrA-binding protein.